A 495-amino-acid polypeptide reads, in one-letter code: 3-octaprenyl-4-hydroxybenzoate carboxy-lyase (495 aa).

Asn-172 lines the Mn(2+) pocket. Residues 175-177 (IYR), 189-191 (RWL), and 194-195 (RG) each bind prenylated FMN. Glu-238 is a Mn(2+) binding site. The active-site Proton donor is the Asp-287.

Belongs to the UbiD family. Homohexamer. Prenylated FMN serves as cofactor. The cofactor is Mn(2+).

It localises to the cell membrane. The catalysed reaction is a 4-hydroxy-3-(all-trans-polyprenyl)benzoate + H(+) = a 2-(all-trans-polyprenyl)phenol + CO2. It participates in cofactor biosynthesis; ubiquinone biosynthesis. Its function is as follows. Catalyzes the decarboxylation of 3-octaprenyl-4-hydroxy benzoate to 2-octaprenylphenol, an intermediate step in ubiquinone biosynthesis. This is 3-octaprenyl-4-hydroxybenzoate carboxy-lyase from Yersinia pseudotuberculosis serotype O:1b (strain IP 31758).